The chain runs to 994 residues: Glutamate [NMDA] receptor subunit 1 (994 aa).

The N-terminal stretch at 1 to 23 (MAADGFVYRWLLFGTTIVLLAEA) is a signal peptide. Over 24-570 (AQRHTASDNP…TLVSFLQPFS (547 aa)) the chain is Extracellular. N-linked (GlcNAc...) asparagine glycosylation is found at Asn255, Asn311, Asn342, Asn394, Asn451, Asn478, and Asn498. Residues 527–529 (PLT) and Arg534 each bind glycine. Residues 571–591 (NTLWILVMVSVHVVALVLYLL) form a helical membrane-spanning segment. Over 592–648 (DRFSPFGRFKLSHSDSNEEKALNLSSAVWFAWGVLLNSGIGEGTPRSFSARVLGMVW) the chain is Cytoplasmic. Residues 649–669 (AGFAMIIVASYTANLAAFLVL) traverse the membrane as a helical segment. Over 670–828 (ERPKTKLSGI…KTPNTLGLKN (159 aa)) the chain is Extracellular. The N-linked (GlcNAc...) asparagine glycan is linked to Asn690. Glycine contacts are provided by Ser700 and Asp744. The helical transmembrane segment at 829-849 (MAGVFILVGVGIAGGVGLIII) threads the bilayer. Residues 850–994 (EVIYKKHQVK…YTSDVSHLVV (145 aa)) lie on the Cytoplasmic side of the membrane. A disordered region spans residues 971–994 (RPQQNMLPPRYSPGYTSDVSHLVV). A compositionally biased stretch (polar residues) spans 984-994 (GYTSDVSHLVV).

Belongs to the glutamate-gated ion channel (TC 1.A.10.1) family. Forms a heteromeric NMDA channel with Nmdar2.

The protein localises to the cell membrane. The protein resides in the postsynaptic cell membrane. It localises to the postsynaptic density. In terms of biological role, NMDA receptor subtype of glutamate-gated ion channels with high calcium permeability and voltage-dependent sensitivity to magnesium. Mediated by glycine. This protein plays a key role in synaptic plasticity, synaptogenesis, excitotoxicity, memory acquisition and learning. It mediates neuronal functions in glutamate neurotransmission. Is involved in the cell surface targeting of NMDA receptors. Plays a role in associative learning and in long-term memory consolidation. In Drosophila ananassae (Fruit fly), this protein is Glutamate [NMDA] receptor subunit 1.